The primary structure comprises 357 residues: Phosphoserine aminotransferase (357 aa).

R41 contributes to the L-glutamate binding site. Residues 75–76 (GT), W100, T150, D170, and Q193 each bind pyridoxal 5'-phosphate. N6-(pyridoxal phosphate)lysine is present on K194. 234 to 235 (NT) lines the pyridoxal 5'-phosphate pocket.

The protein belongs to the class-V pyridoxal-phosphate-dependent aminotransferase family. SerC subfamily. As to quaternary structure, homodimer. Pyridoxal 5'-phosphate is required as a cofactor.

Its subcellular location is the cytoplasm. It catalyses the reaction O-phospho-L-serine + 2-oxoglutarate = 3-phosphooxypyruvate + L-glutamate. The catalysed reaction is 4-(phosphooxy)-L-threonine + 2-oxoglutarate = (R)-3-hydroxy-2-oxo-4-phosphooxybutanoate + L-glutamate. It functions in the pathway amino-acid biosynthesis; L-serine biosynthesis; L-serine from 3-phospho-D-glycerate: step 2/3. Its function is as follows. Catalyzes the reversible conversion of 3-phosphohydroxypyruvate to phosphoserine and of 3-hydroxy-2-oxo-4-phosphonooxybutanoate to phosphohydroxythreonine. This Lactiplantibacillus plantarum (strain ATCC BAA-793 / NCIMB 8826 / WCFS1) (Lactobacillus plantarum) protein is Phosphoserine aminotransferase.